Consider the following 1032-residue polypeptide: ATPase MORC2 (1032 aa).

Alanine 2 carries the N-acetylalanine modification. Residues asparagine 39, 87–89 (SAK), and 99–105 (QYGNGLK) each bind ATP. Mg(2+) is bound at residue asparagine 39. A coiled-coil region spans residues 282 to 362 (SRFKTRAEQE…KEAKQRALKE (81 aa)). Lysine 427 lines the ATP pocket. The segment at 490–544 (AMEIPTTIQCDLCLKWRTLPFQLSSVEKDYPDTWVCSMNPDPEQDRCEASEQKQK) adopts a CW-type zinc-finger fold. 4 residues coordinate Zn(2+): cysteine 499, cysteine 502, cysteine 525, and cysteine 536. 2 disordered regions span residues 530-563 (DPEQ…KQKQ) and 577-793 (ALQK…RAQK). 2 stretches are compositionally biased toward basic and acidic residues: residues 532–543 (EQDRCEASEQKQ) and 550–563 (FRKD…KQKQ). A coiled-coil region spans residues 547-584 (LGTFRKDMKTQEEKQKQLTEKIRQQQEKLEALQKTTPI). Position 582 is a phosphothreonine (threonine 582). Residues serine 602 and serine 615 each carry the phosphoserine modification. A compositionally biased stretch (pro residues) spans 627–638 (SRPPSLPTPRPA). Lysine 652 is covalently cross-linked (Glycyl lysine isopeptide (Lys-Gly) (interchain with G-Cter in SUMO2)). Over residues 690 to 704 (PLVQQLSPSLLPNSK) the composition is skewed to low complexity. The residue at position 696 (serine 696) is a Phosphoserine. Lysine 704 is covalently cross-linked (Glycyl lysine isopeptide (Lys-Gly) (interchain with G-Cter in SUMO2)). A Phosphoserine modification is found at serine 705. Low complexity predominate over residues 711-720 (SPKVIKTPVV). Lysine 716 participates in a covalent cross-link: Glycyl lysine isopeptide (Lys-Gly) (interchain with G-Cter in SUMO2). 2 positions are modified to phosphoserine: serine 725 and serine 730. Position 733 is a phosphothreonine (threonine 733). Position 739 is a phosphoserine; by PAK1 (serine 739). Residues 741-761 (AVSDEEEVEEEAERRKERCKR) are a coiled coil. Position 743 is a phosphoserine (serine 743). A compositionally biased stretch (basic and acidic residues) spans 765 to 774 (VVKEEKKDSN). A Glycyl lysine isopeptide (Lys-Gly) (interchain with G-Cter in SUMO2) cross-link involves residue lysine 767. Serine 777 and serine 779 each carry phosphoserine. Residue lysine 819 forms a Glycyl lysine isopeptide (Lys-Gly) (interchain with G-Cter in SUMO2) linkage. The interval 850–870 (RLMKPPSPEHQSLDTQQEGGE) is disordered. A Glycyl lysine isopeptide (Lys-Gly) (interchain with G-Cter in SUMO2) cross-link involves residue lysine 932. A coiled-coil region spans residues 966-1016 (QSRADSRAKASEESLRTSERKLRETEEKLQKLRTNIVALLQKVQEDIDINT).

In terms of assembly, homodimerizes upon ATP-binding and dissociate upon ATP hydrolysis; homodimerization is required for gene silencing. Interacts with HDAC4. Interacts with ACLY. Interacts with TASOR and MPHOSPH8; the interactions associate MORC2 with the HUSH complex which recruits MORC2 to heterochromatic loci. In terms of processing, phosphorylated by PAK1 at Ser-739 upon DNA damage. Phosphorylation is required for ATPase activity and recruitment to damaged chromatin. In terms of tissue distribution, highly expressed in smooth muscle, pancreas and testis.

It localises to the nucleus. Its subcellular location is the cytoplasm. The protein localises to the cytosol. It is found in the chromosome. The protein resides in the nucleus matrix. It carries out the reaction ATP + H2O = ADP + phosphate + H(+). With respect to regulation, ATPase activity is dependent of phosphorylation by PAK1 and presence of DNA. Functionally, essential for epigenetic silencing by the HUSH (human silencing hub) complex. Recruited by HUSH to target site in heterochromatin, the ATPase activity and homodimerization are critical for HUSH-mediated silencing. Represses germ cell-related genes and L1 retrotransposons in collaboration with SETDB1 and the HUSH complex, the silencing is dependent of repressive epigenetic modifications, such as H3K9me3 mark. Silencing events often occur within introns of transcriptionally active genes, and lead to the down-regulation of host gene expression. During DNA damage response, regulates chromatin remodeling through ATP hydrolysis. Upon DNA damage, is phosphorylated by PAK1, both colocalize to chromatin and induce H2AX expression. ATPase activity is required and dependent of phosphorylation by PAK1 and presence of DNA. Recruits histone deacetylases, such as HDAC4, to promoter regions, causing local histone H3 deacetylation and transcriptional repression of genes such as CA9. Exhibits a cytosolic function in lipogenesis, adipogenic differentiation, and lipid homeostasis by increasing the activity of ACLY, possibly preventing its dephosphorylation. The protein is ATPase MORC2 of Homo sapiens (Human).